Consider the following 573-residue polypeptide: Arginine--tRNA ligase (573 aa).

Positions 122 to 132 (PNLAKEMHVGH) match the 'HIGH' region motif.

This sequence belongs to the class-I aminoacyl-tRNA synthetase family. Monomer.

The protein resides in the cytoplasm. The enzyme catalyses tRNA(Arg) + L-arginine + ATP = L-arginyl-tRNA(Arg) + AMP + diphosphate. The protein is Arginine--tRNA ligase of Laribacter hongkongensis (strain HLHK9).